A 70-amino-acid polypeptide reads, in one-letter code: ATP synthase subunit c (70 aa).

The next 2 helical transmembrane spans lie at 5-25 and 47-67; these read AAGI…AIIV and FIGV…SFIL.

Belongs to the ATPase C chain family. In terms of assembly, F-type ATPases have 2 components, F(1) - the catalytic core - and F(0) - the membrane proton channel. F(1) has five subunits: alpha(3), beta(3), gamma(1), delta(1), epsilon(1). F(0) has three main subunits: a(1), b(2) and c(10-14). The alpha and beta chains form an alternating ring which encloses part of the gamma chain. F(1) is attached to F(0) by a central stalk formed by the gamma and epsilon chains, while a peripheral stalk is formed by the delta and b chains.

Its subcellular location is the cell membrane. In terms of biological role, f(1)F(0) ATP synthase produces ATP from ADP in the presence of a proton or sodium gradient. F-type ATPases consist of two structural domains, F(1) containing the extramembraneous catalytic core and F(0) containing the membrane proton channel, linked together by a central stalk and a peripheral stalk. During catalysis, ATP synthesis in the catalytic domain of F(1) is coupled via a rotary mechanism of the central stalk subunits to proton translocation. Key component of the F(0) channel; it plays a direct role in translocation across the membrane. A homomeric c-ring of between 10-14 subunits forms the central stalk rotor element with the F(1) delta and epsilon subunits. This is ATP synthase subunit c from Halalkalibacterium halodurans (strain ATCC BAA-125 / DSM 18197 / FERM 7344 / JCM 9153 / C-125) (Bacillus halodurans).